Consider the following 361-residue polypeptide: AT-hook motif nuclear-localized protein 12 (361 aa).

Disordered regions lie at residues 29 to 143 (SQVA…GRKQ) and 286 to 361 (NNKT…LTRG). Over residues 48–59 (SNPNIHHPQANN) the composition is skewed to polar residues. Residues 85 to 95 (QPPPPPPPPEE) are compositionally biased toward pro residues. Positions 99 to 107 (KRKRGRPRK) match the Bipartite nuclear localization signal motif. 2 consecutive DNA-binding regions (a.T hook) follow at residues 99-111 (KRKR…YGEP) and 130-142 (KRAR…TGRK). Residues 154–297 (TSAGLAFAPH…KTIRQEKEPN (144 aa)) enclose the PPC domain. Residues 306-322 (ETTPGSAAEPAASAGQQ) show a composition bias toward low complexity.

In terms of assembly, homodimer. Interacts with AHL27, AHL29 and ATAF2/NAC081.

It is found in the nucleus. In terms of biological role, transcription factor that specifically binds AT-rich DNA sequences related to the nuclear matrix attachment regions (MARs). The protein is AT-hook motif nuclear-localized protein 12 of Arabidopsis thaliana (Mouse-ear cress).